Here is a 704-residue protein sequence, read N- to C-terminus: Elongation factor G (704 aa).

Residues 8–290 form the tr-type G domain; that stretch reads ARYRNIGISA…AVIEYLPAPT (283 aa). Residues 17-24, 88-92, and 142-145 contribute to the GTP site; these read AHIDAGKT, DTPGH, and NKMD.

This sequence belongs to the TRAFAC class translation factor GTPase superfamily. Classic translation factor GTPase family. EF-G/EF-2 subfamily.

Its subcellular location is the cytoplasm. Functionally, catalyzes the GTP-dependent ribosomal translocation step during translation elongation. During this step, the ribosome changes from the pre-translocational (PRE) to the post-translocational (POST) state as the newly formed A-site-bound peptidyl-tRNA and P-site-bound deacylated tRNA move to the P and E sites, respectively. Catalyzes the coordinated movement of the two tRNA molecules, the mRNA and conformational changes in the ribosome. This chain is Elongation factor G, found in Proteus mirabilis (strain HI4320).